A 412-amino-acid chain; its full sequence is Decapping nuclease RAI1 (412 aa).

Glu196 lines the a divalent metal cation pocket. Substrate is bound by residues Cys228 and Glu245. 3 residues coordinate a divalent metal cation: Asp247, Glu265, and Leu266. Substrate is bound by residues Lys267 and Gln291.

It belongs to the DXO/Dom3Z family. Interacts with exr-1/rat1; the interaction is direct, stabilizes exr-1 protein structure and stimulates its exoribonuclease activity. The interaction also stimulates rai1 pyrophosphohydrolase activity, probably by recruiting it to mRNA substrates. A divalent metal cation is required as a cofactor.

The protein resides in the nucleus. The enzyme catalyses a 5'-end NAD(+)-phospho-ribonucleoside in mRNA + H2O = a 5'-end phospho-ribonucleoside in mRNA + NAD(+) + H(+). The catalysed reaction is a 5'-end (N(7)-methyl 5'-triphosphoguanosine)-ribonucleoside-ribonucleotide in mRNA + H2O = a (N(7)-methyl 5'-triphosphoguanosine)-nucleoside + a 5'-end phospho-ribonucleoside in mRNA + H(+). It carries out the reaction a 5'-end triphospho-ribonucleoside in mRNA + H2O = a 5'-end phospho-ribonucleoside in mRNA + diphosphate + H(+). Its function is as follows. Decapping enzyme for NAD-capped RNAs: specifically hydrolyzes the nicotinamide adenine dinucleotide (NAD) cap from a subset of RNAs by removing the entire NAD moiety from the 5'-end of an NAD-capped RNA. The NAD-cap is present at the 5'-end of some RNAs and snoRNAs. In contrast to the canonical 5'-end N7 methylguanosine (m7G) cap, the NAD cap promotes mRNA decay. Also acts as a non-canonical decapping enzyme that removes the entire cap structure of m7G capped or incompletely capped RNAs. Has decapping activity toward incomplete 5'-end m7G cap mRNAs such as unmethylated 5'-end-capped RNA (cap0), while it has no activity toward 2'-O-ribose methylated m7G cap (cap1). Also possesses RNA 5'-pyrophosphohydrolase activity by hydrolyzing the 5'-end triphosphate to release pyrophosphates. Stimulates exoribonuclease activity of Rat1, allowing it to degrade RNAs with stable secondary structure more effectively. This is Decapping nuclease RAI1 (rai1) from Neurospora crassa (strain ATCC 24698 / 74-OR23-1A / CBS 708.71 / DSM 1257 / FGSC 987).